We begin with the raw amino-acid sequence, 361 residues long: Putative F-box protein At3g19560 (361 aa).

The 47-residue stretch at 3–49 (MTMMSDISQDLLEEILSRVPITSLRAVKSTCKRWKDLLNDPSFSKKY) folds into the F-box domain.

The sequence is that of Putative F-box protein At3g19560 from Arabidopsis thaliana (Mouse-ear cress).